Here is a 114-residue protein sequence, read N- to C-terminus: MSDDVALPLQFTDAAANKVKSLIADEDNPNLKLRVYITGGGCSGFQYGFTFDDQINDGDMTIEKQGVSLVVDPMSLQYLVGGAVDYTEGLEGSRFVVNNPNATSTCGCGSSFSI.

Iron-sulfur cluster is bound by residues C42, C106, and C108.

It belongs to the HesB/IscA family. In terms of assembly, homodimer. Iron-sulfur cluster is required as a cofactor.

Required for insertion of 4Fe-4S clusters for at least IspG. This is Iron-sulfur cluster insertion protein ErpA from Cronobacter sakazakii (strain ATCC BAA-894) (Enterobacter sakazakii).